Here is a 332-residue protein sequence, read N- to C-terminus: MKIIAYAVRDDERPFFDTWMKENPDVEVKLVPELLTEDNVDLAKGFDGADVYQQKDYTAEVLNKLADEGVKNISLRNVGVDNLDVPTVKARGLNISNVPAYSPNAIAELSVTQLMQLLRQTPLFNKKLAKQDFRWAPDIAKELNTMTVGVIGTGRIGRAAIDIFKGFGAKVIGYDVYRNAELEKEGMYVDTLDELYAQADVITLHVPALKDNYHMLNADAFSKMKDGAYILNFARGTLIDSEDLIKALDSGKVAGAALDTYEYETKIFNKDLEGQTIDDKVFMNLFNRDNVLITPHTAFYTETAVHNMVHVSMNSNKQFIETGKADTQVKFD.

Residues 155–156, Asp-175, 206–207, Asn-212, 233–235, and Asp-259 contribute to the NAD(+) site; these read RI, VP, and FAR. Residue Arg-235 is part of the active site. Residue Glu-264 is part of the active site. His-296 functions as the Proton donor in the catalytic mechanism.

It belongs to the D-isomer specific 2-hydroxyacid dehydrogenase family.

The enzyme catalyses (R)-lactate + NAD(+) = pyruvate + NADH + H(+). The protein is D-lactate dehydrogenase (ldhD) of Lactiplantibacillus plantarum (strain ATCC BAA-793 / NCIMB 8826 / WCFS1) (Lactobacillus plantarum).